Consider the following 212-residue polypeptide: Agglutinin isolectin 1 (212 aa).

The first 26 residues, 1–26 (MKMMSTRALALGAAAVLAFAAATAQA), serve as a signal peptide directing secretion. A Pyrrolidone carboxylic acid modification is found at Gln-27. Chitin-binding type-1 domains lie at 27–68 (QRCG…ACWT), 69–111 (SKRC…PCRA), 112–154 (DIKC…ACST), and 155–197 (DKPC…GCDG). 16 disulfides stabilise this stretch: Cys-29–Cys-44, Cys-38–Cys-50, Cys-43–Cys-57, Cys-61–Cys-66, Cys-72–Cys-87, Cys-81–Cys-93, Cys-86–Cys-100, Cys-104–Cys-109, Cys-115–Cys-130, Cys-124–Cys-136, Cys-129–Cys-143, Cys-147–Cys-152, Cys-158–Cys-173, Cys-167–Cys-179, Cys-172–Cys-186, and Cys-190–Cys-195. 36–38 (MEC) provides a ligand contact to substrate. Substrate is bound at residue 88 to 99 (SQYGYCGFGAEY). 140–141 (SE) contacts substrate. Residues 198 to 212 (VFAEAITANSTLLQE) constitute a propeptide that is removed on maturation.

In terms of assembly, homodimer, u-shaped.

Functionally, N-acetyl-D-glucosamine / N-acetyl-D-neuraminic acid binding lectin. This chain is Agglutinin isolectin 1, found in Triticum aestivum (Wheat).